The primary structure comprises 234 residues: Purine nucleoside phosphorylase DeoD-type (234 aa).

H5 provides a ligand contact to a purine D-ribonucleoside. Phosphate-binding positions include G21, R25, R44, and 88-91 (RVGT). Residues 178–180 (EME) and 202–203 (SD) each bind a purine D-ribonucleoside. Catalysis depends on D203, which acts as the Proton donor.

It belongs to the PNP/UDP phosphorylase family. As to quaternary structure, homohexamer; trimer of homodimers.

The enzyme catalyses a purine D-ribonucleoside + phosphate = a purine nucleobase + alpha-D-ribose 1-phosphate. It catalyses the reaction a purine 2'-deoxy-D-ribonucleoside + phosphate = a purine nucleobase + 2-deoxy-alpha-D-ribose 1-phosphate. Its function is as follows. Catalyzes the reversible phosphorolytic breakdown of the N-glycosidic bond in the beta-(deoxy)ribonucleoside molecules, with the formation of the corresponding free purine bases and pentose-1-phosphate. This Lactococcus lactis subsp. lactis (strain IL1403) (Streptococcus lactis) protein is Purine nucleoside phosphorylase DeoD-type.